The following is a 413-amino-acid chain: MDFTNLKNTDPELLDMIKKEEERQEYNIELIASENFTSLSVMESMGSLLTNKYAEGYPHKRYYGGCEFVDEVEDLARERLKKLFAAEHANVQPHSGSQANMAVYMSVLQTGDTILGMDLSHGGHLTHGSPVNFSGKLYNFISYGVDKETETIDYEKLKKIALENRPKMIVSGASAYPRIIDFQKIREICDEIDAYMMVDMAHIAGLVATGLHPSPVPYADFVTTTTHKTLRGPRGGAILCKEKYAKAVDKAIFPGIQGGPLMHTIAAKAVCFGEALREDYKEYMQQVVKNTKVLGEELKNYGFRLISGGTDNHLLLIDLTNKNITGKDAEKLLDSVGITVNKNTIPFETLSPFITSGIRIGTPAVTTRGFKEEEMKKIAYFMNYSIEHREENLSQIKEQIKEICKKYPLYQNA.

Residues leucine 119 and 123–125 (GHL) contribute to the (6S)-5,6,7,8-tetrahydrofolate site. The residue at position 228 (lysine 228) is an N6-(pyridoxal phosphate)lysine. Position 351-353 (351-353 (SPF)) interacts with (6S)-5,6,7,8-tetrahydrofolate.

It belongs to the SHMT family. In terms of assembly, homodimer. It depends on pyridoxal 5'-phosphate as a cofactor.

The protein localises to the cytoplasm. The catalysed reaction is (6R)-5,10-methylene-5,6,7,8-tetrahydrofolate + glycine + H2O = (6S)-5,6,7,8-tetrahydrofolate + L-serine. It participates in one-carbon metabolism; tetrahydrofolate interconversion. The protein operates within amino-acid biosynthesis; glycine biosynthesis; glycine from L-serine: step 1/1. Functionally, catalyzes the reversible interconversion of serine and glycine with tetrahydrofolate (THF) serving as the one-carbon carrier. This reaction serves as the major source of one-carbon groups required for the biosynthesis of purines, thymidylate, methionine, and other important biomolecules. Also exhibits THF-independent aldolase activity toward beta-hydroxyamino acids, producing glycine and aldehydes, via a retro-aldol mechanism. The sequence is that of Serine hydroxymethyltransferase from Clostridium botulinum (strain ATCC 19397 / Type A).